The chain runs to 808 residues: MAGTVVLDDVELREAQRDYLDFLDDEEDQGIYQSKVRELISDNQYRLIVNVNDLRRKNEKRANRLLNNAFEELVAFQRALKDFVASIDATYAKQYEEFYVGLEGSFGSKHVSPRTLTSCFLSCVVCVEGIVTKCSLVRPKVVRSVHYCPATKKTIERRYSDLTTLVAFPSSSVYPTKDEENNPLETEYGLSVYKDHQTITIQEMPEKAPAGQLPRSVDVILDDDLVDKAKPGDRVQVVGTYRCLPGKKGGYTSGTFRTVLIACNVKQMSKDAQPSFSAEDIAKIKKFSKTRSKDIFDQLAKSLAPSIHGHDYVKKAILCLLLGGVERDLENGSHIRGDINILLIGDPSVAKSQLLRYVLCTAPRAIPTTGRGSSGVGLTAAVTTDQETGERRLEAGAMVLADRGVVCIDEFDKMSDMDRTAIHEVMEQGRVTIAKAGIHARLNARCSVLAAANPVYGRYDQYKTPMENIGLQDSLLSRFDLLFIMLDQMDPEQDREISDHVLRMHRYRAPGEQDGDAMPLGSAVDILATDDPNFSQEDQQDTQIYEKHDNLLHGTKKKKEKMVSAAFMKKYIHVAKIIKPVLTQESATYIAEEYSRLRSQDSMSSDTARTSPVTARTLETLIRLATAHAKARMSKTVDLQDAEEAVELVQYAYFKKVLEKEKKRKKRSEDESETEDEEEKSQEDQEQKRKRRKTRQPDAKDGDSYDPYDFSDTEEEMPQVHTPKTADSQETKESQKVELSESRLKAFKVALLDVFREAHAQSIGMNRLTESINRDSEEPFSSVEIQAALSKMQDDNQVMVSEGIIFLI.

Alanine 2 carries the post-translational modification N-acetylalanine. A phosphoserine mark is found at serine 160 and serine 275. Residue lysine 293 is modified to N6-acetyllysine. The region spanning 295–502 (IFDQLAKSLA…QDREISDHVL (208 aa)) is the MCM domain. The ADP site is built by glutamine 353, leucine 393, glutamate 394, alanine 395, and alanine 397. Positions 477-480 (SRFD) match the Arginine finger motif. Alanine 523 is a binding site for ATP. Residue serine 535 is modified to Phosphoserine; by ATM. Residue lysine 547 is modified to N6-acetyllysine. Serine 611 bears the Phosphoserine mark. Residues 662-739 (KKRKKRSEDE…ETKESQKVEL (78 aa)) are disordered. Arginine 664 lines the ATP pocket. Phosphoserine is present on residues serine 668 and serine 672. 2 stretches are compositionally biased toward acidic residues: residues 670–681 (DESETEDEEEKS) and 704–717 (SYDPYDFSDTEEEM). Threonine 674 carries the phosphothreonine modification. Serine 681 carries the post-translational modification Phosphoserine. At tyrosine 708 the chain carries Phosphotyrosine. A Phosphoserine modification is found at serine 711. Phosphothreonine is present on residues threonine 713, threonine 722, and threonine 725. Basic and acidic residues predominate over residues 727 to 739 (DSQETKESQKVEL). Phosphoserine occurs at positions 728 and 734.

It belongs to the MCM family. Component of the MCM2-7 complex. The complex forms a toroidal hexameric ring with the proposed subunit order MCM2-MCM6-MCM4-MCM7-MCM3-MCM5. Component of the CMG helicase complex, a hexameric ring of related MCM2-7 subunits stabilized by CDC45 and the tetrameric GINS complex. Associated with the replication-specific DNA polymerase alpha. Interacts with MCMBP. Interacts with ANKRD17. Interacts with MCM3AP isoform MCM3AP; this interaction leads to MCM3 acetylation. Acetylated by MCM3AP. Post-translationally, O-glycosylated (O-GlcNAcylated), in a cell cycle-dependent manner.

Its subcellular location is the nucleus. The protein resides in the chromosome. It catalyses the reaction ATP + H2O = ADP + phosphate + H(+). Acts as a component of the MCM2-7 complex (MCM complex) which is the replicative helicase essential for 'once per cell cycle' DNA replication initiation and elongation in eukaryotic cells. Core component of CDC45-MCM-GINS (CMG) helicase, the molecular machine that unwinds template DNA during replication, and around which the replisome is built. The active ATPase sites in the MCM2-7 ring are formed through the interaction surfaces of two neighboring subunits such that a critical structure of a conserved arginine finger motif is provided in trans relative to the ATP-binding site of the Walker A box of the adjacent subunit. The six ATPase active sites, however, are likely to contribute differentially to the complex helicase activity. Required for the entry in S phase and for cell division. The protein is DNA replication licensing factor MCM3 of Homo sapiens (Human).